The primary structure comprises 473 residues: MTKNIGKITQIISAVVDVKFTNNGELPKILNALECYNDKQRIVLEVAQHIGDDTVRCIAMDSMEGLVRGVEVIDTGSPIRIPVGTETLGRIMNVVGEPIDGKGDIKSSNISSIYKPAPDFTHQSTECNILVTGIKVIDLLAPYTKGGKIGLFGGAGVGKTVLIMELINNVAKAHGGYTVFAGVGERTREGNDLYHEMIDSGVINLAEPEKSKVALVYGQMNEPPGARARVALSGLTIAESFRDMNEGQDVLFFVDNIFRFTQAGSEVSALLGRIPSAVGYQPTLATDMGELQERITSTKYGSITSVQAIYVPADDLTDPAPATSFAHLDATTVLSRQIAEFGIYPAVDPLDSNSQVLDPMIVGEEHYSVARQVQQVLQTYKSLQDIITILGMDELSEEDKLTVARARKIQRFLSQPFHVAEVFTGAAGKFVNLADTIAGFKGLVEGKYDDLPEAAFYMVGTIDEAIEKAQTLK.

153–160 (GGAGVGKT) provides a ligand contact to ATP.

It belongs to the ATPase alpha/beta chains family. In terms of assembly, F-type ATPases have 2 components, CF(1) - the catalytic core - and CF(0) - the membrane proton channel. CF(1) has five subunits: alpha(3), beta(3), gamma(1), delta(1), epsilon(1). CF(0) has three main subunits: a(1), b(2) and c(9-12). The alpha and beta chains form an alternating ring which encloses part of the gamma chain. CF(1) is attached to CF(0) by a central stalk formed by the gamma and epsilon chains, while a peripheral stalk is formed by the delta and b chains.

It is found in the cell inner membrane. The enzyme catalyses ATP + H2O + 4 H(+)(in) = ADP + phosphate + 5 H(+)(out). Functionally, produces ATP from ADP in the presence of a proton gradient across the membrane. The catalytic sites are hosted primarily by the beta subunits. This is ATP synthase subunit beta from Rickettsia conorii (strain ATCC VR-613 / Malish 7).